The following is a 1052-amino-acid chain: Focal adhesion kinase 1 (1052 aa).

A disordered region spans residues 1–27; it reads MAAAYLDPNLNHTPSSSTKTHLGTGME. At Ala-2 the chain carries N-acetylalanine. Tyr-5 carries the post-translational modification Phosphotyrosine. Polar residues predominate over residues 10–21; it reads LNHTPSSSTKTH. A Phosphothreonine modification is found at Thr-13. A phosphoserine mark is found at Ser-29 and Ser-54. Positions 35 to 355 constitute an FERM domain; it reads RVLKVFHYFE…GYCRLVNGAT (321 aa). Lys-152 participates in a covalent cross-link: Glycyl lysine isopeptide (Lys-Gly) (interchain with G-Cter in SUMO). Phosphotyrosine occurs at positions 397 and 407. Tyr-397 is subject to Phosphotyrosine; by autocatalysis. ATP is bound by residues 428–434, Lys-454, and 500–502; these read IGEGQFG and ELC. One can recognise a Protein kinase domain in the interval 431-680; sequence GQFGDVHQGV…ELKAQLSTIL (250 aa). Asp-546 serves as the catalytic Proton acceptor. Residue Tyr-570 is modified to Phosphotyrosine. Tyr-576 and Tyr-577 each carry phosphotyrosine; by RET and SRC. Ser-580 bears the Phosphoserine mark. Over residues 685–697 the composition is skewed to basic and acidic residues; it reads VQQEERMRMESRR. Disordered stretches follow at residues 685 to 734 and 837 to 921; these read VQQE…PSPQ and VRLS…DRSN. Positions 707 to 1052 are interaction with TGFB1I1; it reads GSDEAPPKPS…LKMLGQTRPH (346 aa). The residue at position 722 (Ser-722) is a Phosphoserine. A Phosphoserine; by CDK5 modification is found at Ser-732. The segment covering 837–849 has biased composition (basic and acidic residues); that stretch reads VRLSRGSIDREDG. Ser-843 carries the post-translational modification Phosphoserine. Residue Tyr-861 is modified to Phosphotyrosine. The span at 869 to 880 shows a compositional bias: pro residues; sequence PAAPPKKPPRPG. The segment covering 886 to 896 has biased composition (polar residues); that stretch reads SNLSSISSPAD. Ser-910 carries the post-translational modification Phosphoserine. Residues 912–1052 form an interaction with ARHGEF28 region; that stretch reads PPTANLDRSN…LKMLGQTRPH (141 aa). Thr-914 carries the post-translational modification Phosphothreonine. Tyr-925 is modified (phosphotyrosine; by SRC).

It belongs to the protein kinase superfamily. Tyr protein kinase family. FAK subfamily. In terms of assembly, interacts with GIT1. Component of a complex that contains at least FER, CTTN and PTK2/FAK1. Interacts with BMX. Interacts with STEAP4. Interacts with ZFYVE21. Interacts with ESR1. Interacts with FGR, FLT4 and RET. Interacts with EPHA2 in resting cells; activation of EPHA2 recruits PTPN11, leading to dephosphorylation of PTK2/FAK1 and dissociation of the complex. Interacts with EPHA1 (kinase activity-dependent). Interacts with MISP. Interacts with PIAS1. Interacts with ARHGAP26 and SHC1. Interacts with RB1CC1; this inhibits PTK2/FAK1 activity and activation of downstream signaling pathways. Interacts with P53/TP53. Interacts with STAT1. Interacts with WASL. Interacts with ARHGEF7. Interacts with DCC. Interacts (via first Pro-rich region) with CAS family members (via SH3 domain), including BCAR1, BCAR3 and CASS4. Interacts with NEDD9 (via C-terminus). Interacts with SORBS1. Interacts with ARHGEF28. Interacts with SHB. Part of a complex composed of THSD1, PTK2/FAK1, TLN1 and VCL. Interacts with PXN and TLN1. Interacts with TGFB1I1. Interacts with PIK3R1 or PIK3R2. Interacts with SRC, GRB2 and GRB7. Interacts with LPXN (via LD motif 3). Interacts with CD36. Interacts with EMP2; regulates PTK2 activation and localization. Interacts with DSCAM. Interacts with AMBRA1. Interacts (when tyrosine-phosphorylated) with tensin TNS1; the interaction is increased by phosphorylation of TNS1. Phosphorylated on tyrosine residues upon activation, e.g. upon integrin signaling. Tyr-397 is the major autophosphorylation site, but other kinases can also phosphorylate this residue. Phosphorylation at Tyr-397 promotes interaction with SRC and SRC family members, leading to phosphorylation at Tyr-576, Tyr-577 and at additional tyrosine residues. FGR promotes phosphorylation at Tyr-397 and Tyr-576. FER promotes phosphorylation at Tyr-577, Tyr-861 and Tyr-925, even when cells are not adherent. Tyr-397, Tyr-576 and Ser-722 are phosphorylated only when cells are adherent. Phosphorylation at Tyr-397 is important for interaction with BMX, PIK3R1 and SHC1. Phosphorylation at Tyr-925 is important for interaction with GRB2. Dephosphorylated by PTPN11; PTPN11 is recruited to PTK2 via EPHA2 (tyrosine phosphorylated). Microtubule-induced dephosphorylation at Tyr-397 is crucial for the induction of focal adhesion disassembly; this dephosphorylation could be catalyzed by PTPN11 and regulated by ZFYVE21. Phosphorylation on tyrosine residues is enhanced by NTN1. Post-translationally, sumoylated; this enhances autophosphorylation.

Its subcellular location is the cell junction. The protein resides in the focal adhesion. The protein localises to the cell membrane. It localises to the cytoplasm. It is found in the perinuclear region. Its subcellular location is the cell cortex. The protein resides in the cytoskeleton. The protein localises to the microtubule organizing center. It localises to the centrosome. It is found in the nucleus. Its subcellular location is the cilium basal body. The catalysed reaction is L-tyrosyl-[protein] + ATP = O-phospho-L-tyrosyl-[protein] + ADP + H(+). Subject to autoinhibition, mediated by interactions between the FERM domain and the kinase domain. Activated by autophosphorylation at Tyr-397. This promotes interaction with SRC and phosphorylation at Tyr-576 and Tyr-577 in the kinase activation loop by SRC. Phosphorylation at Tyr-397, Tyr-576 and Tyr-577 is required for maximal kinase activity. Non-receptor protein-tyrosine kinase that plays an essential role in regulating cell migration, adhesion, spreading, reorganization of the actin cytoskeleton, formation and disassembly of focal adhesions and cell protrusions, cell cycle progression, cell proliferation and apoptosis. Required for early embryonic development and placenta development. Required for embryonic angiogenesis, normal cardiomyocyte migration and proliferation, and normal heart development. Regulates axon growth and neuronal cell migration, axon branching and synapse formation; required for normal development of the nervous system. Plays a role in osteogenesis and differentiation of osteoblasts. Functions in integrin signal transduction, but also in signaling downstream of numerous growth factor receptors, G-protein coupled receptors (GPCR), EPHA2, netrin receptors and LDL receptors. Forms multisubunit signaling complexes with SRC and SRC family members upon activation; this leads to the phosphorylation of additional tyrosine residues, creating binding sites for scaffold proteins, effectors and substrates. Regulates numerous signaling pathways. Promotes activation of phosphatidylinositol 3-kinase and the AKT1 signaling cascade. Promotes activation of MAPK1/ERK2, MAPK3/ERK1 and the MAP kinase signaling cascade. Promotes localized and transient activation of guanine nucleotide exchange factors (GEFs) and GTPase-activating proteins (GAPs), and thereby modulates the activity of Rho family GTPases. Signaling via CAS family members mediates activation of RAC1. Phosphorylates NEDD9 following integrin stimulation. Recruits the ubiquitin ligase MDM2 to P53/TP53 in the nucleus, and thereby regulates P53/TP53 activity, P53/TP53 ubiquitination and proteasomal degradation. Phosphorylates SRC; this increases SRC kinase activity. Phosphorylates ACTN1, ARHGEF7, GRB7, RET and WASL. Promotes phosphorylation of PXN and STAT1; most likely PXN and STAT1 are phosphorylated by a SRC family kinase that is recruited to autophosphorylated PTK2/FAK1, rather than by PTK2/FAK1 itself. Promotes phosphorylation of BCAR1; GIT2 and SHC1; this requires both SRC and PTK2/FAK1. Promotes phosphorylation of BMX and PIK3R1. Functionally, does not contain a kinase domain and inhibits PTK2/FAK1 phosphorylation and signaling. Its enhanced expression can attenuate the nuclear accumulation of LPXN and limit its ability to enhance serum response factor (SRF)-dependent gene transcription. This Mus musculus (Mouse) protein is Focal adhesion kinase 1.